We begin with the raw amino-acid sequence, 134 residues long: MAKAPVNNAARRVSKKVRKNIADGVAHVHASFNNTIITITDRQGNALSWASSGGQGFKGSRKSTPFAAQVAAEVAGRAAQEQGIKNLDVKIKGPGPGRESSVRALASLGIRIASISDVTPVPHNGCRPQKRRRI.

This sequence belongs to the universal ribosomal protein uS11 family. Part of the 30S ribosomal subunit. Interacts with proteins S7 and S18. Binds to IF-3.

Located on the platform of the 30S subunit, it bridges several disparate RNA helices of the 16S rRNA. Forms part of the Shine-Dalgarno cleft in the 70S ribosome. The sequence is that of Small ribosomal subunit protein uS11 from Leptothrix cholodnii (strain ATCC 51168 / LMG 8142 / SP-6) (Leptothrix discophora (strain SP-6)).